Reading from the N-terminus, the 251-residue chain is Tyrosine transport ATP-binding protein (251 aa).

The ABC transporter domain occupies 2–248 (LQIKNLSKSF…TVEEILEKFE (247 aa)). 39–46 (GSNGTGKS) provides a ligand contact to ATP.

It belongs to the ABC transporter superfamily. In terms of assembly, the complex is probably composed of two ATP-binding proteins (CDR20291_0806), two transmembrane proteins (CDR20291_0807) and a solute-binding protein (CDR20291_0805).

The protein localises to the cell membrane. It carries out the reaction L-tyrosine(out) + ATP + H2O = L-tyrosine(in) + ADP + phosphate + H(+). Functionally, probably part of an ABC transporter complex involved in tyrosine uptake. May also import phenylalanine. Probably responsible for energy coupling to the transport system. This is Tyrosine transport ATP-binding protein from Clostridioides difficile (strain R20291) (Peptoclostridium difficile).